Here is a 286-residue protein sequence, read N- to C-terminus: 4-hydroxybenzoate octaprenyltransferase (286 aa).

7 helical membrane passes run 21-40, 96-116, 142-162, 167-187, 210-230, 235-255, and 266-286; these read GTLL…AGGM, LFVI…GLVV, FLGV…TGEV, WWLF…YAMV, QIIG…GWSA, LYGL…MLIF, and FLNN…DYLF.

This sequence belongs to the UbiA prenyltransferase family. Mg(2+) serves as cofactor.

Its subcellular location is the cell inner membrane. The enzyme catalyses all-trans-octaprenyl diphosphate + 4-hydroxybenzoate = 4-hydroxy-3-(all-trans-octaprenyl)benzoate + diphosphate. It participates in cofactor biosynthesis; ubiquinone biosynthesis. Functionally, catalyzes the prenylation of para-hydroxybenzoate (PHB) with an all-trans polyprenyl group. Mediates the second step in the final reaction sequence of ubiquinone-8 (UQ-8) biosynthesis, which is the condensation of the polyisoprenoid side chain with PHB, generating the first membrane-bound Q intermediate 3-octaprenyl-4-hydroxybenzoate. This Shewanella sp. (strain ANA-3) protein is 4-hydroxybenzoate octaprenyltransferase.